The sequence spans 319 residues: Quinolinate synthase (319 aa).

2 residues coordinate iminosuccinate: His35 and Ser52. Cys97 contacts [4Fe-4S] cluster. Iminosuccinate contacts are provided by residues 123–125 (YIN) and Ser140. Position 183 (Cys183) interacts with [4Fe-4S] cluster. Iminosuccinate-binding positions include 209–211 (HPE) and Thr226. Cys276 provides a ligand contact to [4Fe-4S] cluster.

The protein belongs to the quinolinate synthase family. Type 2 subfamily. [4Fe-4S] cluster is required as a cofactor.

It is found in the cytoplasm. The catalysed reaction is iminosuccinate + dihydroxyacetone phosphate = quinolinate + phosphate + 2 H2O + H(+). Its pathway is cofactor biosynthesis; NAD(+) biosynthesis; quinolinate from iminoaspartate: step 1/1. Catalyzes the condensation of iminoaspartate with dihydroxyacetone phosphate to form quinolinate. This chain is Quinolinate synthase, found in Microcystis aeruginosa (strain NIES-843 / IAM M-2473).